The chain runs to 413 residues: 1-acylglycerol-3-phosphate O-acyltransferase Pnpla3 (413 aa).

Over 1–42 (MYDPERRWSLSFAGCGFLGFYHVGATLCLSERAPHLLRDART) the chain is Cytoplasmic. Positions 10 to 179 (LSFAGCGFLG…SDNVPVLDAK (170 aa)) constitute a PNPLA domain. A GXGXXG motif is present at residues 14-19 (GCGFLG). A helical; Signal-anchor for type II membrane protein membrane pass occupies residues 43 to 63 (FFGCSAGALHAVTFVCSLPLG). A GXSXG motif is present at residues 45–49 (GCSAG). Catalysis depends on serine 47, which acts as the Nucleophile. At 64–413 (RIMEILMDLV…HKPQGNSAGL (350 aa)) the chain is on the lumenal side. Catalysis depends on aspartate 166, which acts as the Proton acceptor. Positions 166 to 168 (DGG) match the DGA/G motif. 2 N-linked (GlcNAc...) asparagine glycosylation sites follow: asparagine 206 and asparagine 209. Residues 389–413 (KDDHRMLKHGHHPSPHKPQGNSAGL) form a disordered region. The span at 394-403 (MLKHGHHPSP) shows a compositional bias: basic residues.

Restricted to adipose tissue. Expressed in inguinal and epididymal white adipose tissues and in interscapular brown adipose tissue. Also expressed in liver in response to high-sucrose diet.

It is found in the membrane. Its subcellular location is the lipid droplet. It catalyses the reaction a 1-acyl-sn-glycero-3-phosphate + an acyl-CoA = a 1,2-diacyl-sn-glycero-3-phosphate + CoA. The catalysed reaction is a triacylglycerol + H2O = a diacylglycerol + a fatty acid + H(+). It carries out the reaction a 1-acylglycerol + a 1,3-diacylglycerol = a triacylglycerol + glycerol. The enzyme catalyses a 1-acylglycerol + a 1,2-diacylglycerol = a triacylglycerol + glycerol. It catalyses the reaction 2 a 1-acylglycerol = a 1,2-diacylglycerol + glycerol. The catalysed reaction is 1-(9Z-octadecenoyl)-sn-glycero-3-phosphate + (9Z)-octadecenoyl-CoA = 1,2-di-(9Z-octadecenoyl)-sn-glycero-3-phosphate + CoA. It carries out the reaction 1-(9Z-octadecenoyl)-sn-glycero-3-phosphate + hexadecanoyl-CoA = 1-(9Z)-octadecenoyl-2-hexadecanoyl-sn-glycero-3-phosphate + CoA. The enzyme catalyses 1-(9Z-octadecenoyl)-sn-glycero-3-phosphate + (9Z,12Z)-octadecadienoyl-CoA = 1-(9Z)-octadecenoyl-2-(9Z,12Z)-octadecadienoyl-sn-glycero-3-phosphate + CoA. It catalyses the reaction 1-(9Z-octadecenoyl)-sn-glycero-3-phosphate + (5Z,8Z,11Z,14Z)-eicosatetraenoyl-CoA = 1-(9Z)-octadecenoyl-2-(5Z,8Z,11Z,14Z)-eicosatetraenoyl-sn-glycero-3-phosphate + CoA. The catalysed reaction is 2 1-(9Z-octadecenoyl)-glycerol = 1,2-di-(9Z-octadecenoyl)-glycerol + glycerol. It carries out the reaction 1-(9Z-octadecenoyl)-glycerol + 1,2-di-(9Z-octadecenoyl)-glycerol = 1,2,3-tri-(9Z-octadecenoyl)-glycerol + glycerol. The enzyme catalyses 1-(9Z-octadecenoyl)-glycerol + 1,3-di-(9Z-octadecenoyl)-glycerol = 1,2,3-tri-(9Z-octadecenoyl)-glycerol + glycerol. It catalyses the reaction 1,2,3-tri-(9Z-octadecenoyl)-glycerol + H2O = 1,3-di-(9Z-octadecenoyl)-glycerol + (9Z)-octadecenoate + H(+). The catalysed reaction is a 1,2-diacyl-sn-glycero-3-phosphocholine + H2O = a 1-acyl-sn-glycero-3-phosphocholine + a fatty acid + H(+). The protein operates within phospholipid metabolism. It participates in glycerolipid metabolism. In terms of biological role, specifically catalyzes coenzyme A (CoA)-dependent acylation of 1-acyl-sn-glycerol 3-phosphate (2-lysophosphatidic acid/LPA) to generate phosphatidic acid (PA), an important metabolic intermediate and precursor for both triglycerides and glycerophospholipids. Does not esterify other lysophospholipids. Acyl donors are long chain (at least C16) fatty acyl-CoAs: arachidonoyl-CoA, linoleoyl-CoA, oleoyl-CoA and at a lesser extent palmitoyl-CoA. Additionally possesses low triacylglycerol lipase and CoA-independent acylglycerol transacylase activities and thus may play a role in acyl-chain remodeling of triglycerides. In vitro may express hydrolytic activity against glycerolipids triacylglycerol, diacylglycerol and monoacylglycerol, with a strong preference for oleic acid as the acyl moiety. However, the triacylglycerol hydrolase activity is controversial and may be very low. Possesses phospholipase A2 activity. The protein is 1-acylglycerol-3-phosphate O-acyltransferase Pnpla3 of Mus musculus (Mouse).